The primary structure comprises 230 residues: U2 small nuclear ribonucleoprotein A' (230 aa).

LRR repeat units lie at residues Lys19–Pro40, Arg41–Ser62, and Gly65–Arg86. Residues Asn99–Leu137 enclose the LRRCT domain. Residues Gly211–Leu230 are disordered. The span at Ile213–Asn223 shows a compositional bias: gly residues.

It belongs to the U2 small nuclear ribonucleoprotein A family. In terms of assembly, associated with the spliceosome.

The protein localises to the nucleus. In terms of biological role, involved in pre-mRNA splicing. The chain is U2 small nuclear ribonucleoprotein A' (lea1) from Emericella nidulans (strain FGSC A4 / ATCC 38163 / CBS 112.46 / NRRL 194 / M139) (Aspergillus nidulans).